Consider the following 526-residue polypeptide: Aspartate ammonia-lyase (526 aa).

Residues 1–44 form a disordered region; the sequence is MSKTSNKSSADSKNDAKAEDIVNGENQIATNESQSSDSAAVSER. The span at 10-20 shows a compositional bias: basic and acidic residues; it reads ADSKNDAKAED. Residues 24–39 show a composition bias toward polar residues; that stretch reads GENQIATNESQSSDSA. Thr-155, Ser-194, Thr-195, Asn-196, and Thr-241 together coordinate L-aspartate. The SS loop stretch occupies residues 371–380; that stretch reads GSSIMPAKVN. The active-site Proton acceptor is Ser-372. Ser-373 and Lys-378 together coordinate L-aspartate.

The protein belongs to the class-II fumarase/aspartase family. Aspartase subfamily. Homotetramer.

It catalyses the reaction L-aspartate = fumarate + NH4(+). In terms of biological role, catalyzes the reversible conversion of L-aspartate to fumarate and ammonia. The chain is Aspartate ammonia-lyase from Corynebacterium glutamicum (strain ATCC 13032 / DSM 20300 / JCM 1318 / BCRC 11384 / CCUG 27702 / LMG 3730 / NBRC 12168 / NCIMB 10025 / NRRL B-2784 / 534).